We begin with the raw amino-acid sequence, 693 residues long: Elongation factor G (693 aa).

Residues 8–284 form the tr-type G domain; sequence DMTRNVGIMA…AIVNYMPAPT (277 aa). GTP is bound by residues 17–24, 81–85, and 135–138; these read AHIDAGKT, DTPGH, and NKMD.

It belongs to the TRAFAC class translation factor GTPase superfamily. Classic translation factor GTPase family. EF-G/EF-2 subfamily.

It is found in the cytoplasm. Its function is as follows. Catalyzes the GTP-dependent ribosomal translocation step during translation elongation. During this step, the ribosome changes from the pre-translocational (PRE) to the post-translocational (POST) state as the newly formed A-site-bound peptidyl-tRNA and P-site-bound deacylated tRNA move to the P and E sites, respectively. Catalyzes the coordinated movement of the two tRNA molecules, the mRNA and conformational changes in the ribosome. The sequence is that of Elongation factor G from Fusobacterium nucleatum subsp. nucleatum (strain ATCC 25586 / DSM 15643 / BCRC 10681 / CIP 101130 / JCM 8532 / KCTC 2640 / LMG 13131 / VPI 4355).